The sequence spans 232 residues: Chalcone synthase (232 aa).

C7 is a catalytic residue.

The protein belongs to the thiolase-like superfamily. Chalcone/stilbene synthases family.

It catalyses the reaction (E)-4-coumaroyl-CoA + 3 malonyl-CoA + 3 H(+) = 2',4,4',6'-tetrahydroxychalcone + 3 CO2 + 4 CoA. The protein operates within secondary metabolite biosynthesis; flavonoid biosynthesis. The primary product of this enzyme is 4,2',4',6'-tetrahydroxychalcone (also termed naringenin-chalcone or chalcone) which can under specific conditions spontaneously isomerize into naringenin. This Malus domestica (Apple) protein is Chalcone synthase (CHS).